The sequence spans 666 residues: DNA ligase (666 aa).

NAD(+)-binding positions include 34-38, 83-84, and Glu114; these read DEEYD and SL. Catalysis depends on Lys116, which acts as the N6-AMP-lysine intermediate. The NAD(+) site is built by Arg137, Glu174, Lys290, and Lys314. Zn(2+)-binding residues include Cys408, Cys411, Cys424, and Cys429. The BRCT domain maps to 584–666; that stretch reads SIEGPLKGLT…LKMVKREHNG (83 aa).

Belongs to the NAD-dependent DNA ligase family. LigA subfamily. Mg(2+) serves as cofactor. The cofactor is Mn(2+).

It catalyses the reaction NAD(+) + (deoxyribonucleotide)n-3'-hydroxyl + 5'-phospho-(deoxyribonucleotide)m = (deoxyribonucleotide)n+m + AMP + beta-nicotinamide D-nucleotide.. In terms of biological role, DNA ligase that catalyzes the formation of phosphodiester linkages between 5'-phosphoryl and 3'-hydroxyl groups in double-stranded DNA using NAD as a coenzyme and as the energy source for the reaction. It is essential for DNA replication and repair of damaged DNA. This is DNA ligase from Coprothermobacter proteolyticus (strain ATCC 35245 / DSM 5265 / OCM 4 / BT).